The sequence spans 333 residues: Adenosine deaminase (333 aa).

Zn(2+)-binding residues include H12 and H14. The substrate site is built by H14, D16, and G170. H197 lines the Zn(2+) pocket. E200 serves as the catalytic Proton donor. D278 contacts Zn(2+). D279 is a binding site for substrate.

This sequence belongs to the metallo-dependent hydrolases superfamily. Adenosine and AMP deaminases family. Adenosine deaminase subfamily. Zn(2+) is required as a cofactor.

It catalyses the reaction adenosine + H2O + H(+) = inosine + NH4(+). It carries out the reaction 2'-deoxyadenosine + H2O + H(+) = 2'-deoxyinosine + NH4(+). Its function is as follows. Catalyzes the hydrolytic deamination of adenosine and 2-deoxyadenosine. The protein is Adenosine deaminase of Pseudoalteromonas translucida (strain TAC 125).